The primary structure comprises 96 residues: Large ribosomal subunit protein bL21 (96 aa).

Basic residues predominate over residues 73–84 (KRRKRYQSRNGH). The interval 73–96 (KRRKRYQSRNGHRQQMTQIEVVSL) is disordered. Polar residues predominate over residues 85–96 (RQQMTQIEVVSL).

It belongs to the bacterial ribosomal protein bL21 family. As to quaternary structure, part of the 50S ribosomal subunit. Contacts protein L20.

This protein binds to 23S rRNA in the presence of protein L20. In Chlorobium phaeovibrioides (strain DSM 265 / 1930) (Prosthecochloris vibrioformis (strain DSM 265)), this protein is Large ribosomal subunit protein bL21.